The sequence spans 333 residues: G-protein coupled receptor 146 (333 aa).

Topologically, residues 1–22 (MWSCGPLNSTAWAEEPLCRNLR) are extracellular. The N-linked (GlcNAc...) asparagine glycan is linked to Asn8. Residues 23–43 (LGLWVLSLLYLGAGVPVSLGY) traverse the membrane as a helical segment. Residues 44-64 (NALLVLANLASKNTMTMPDVY) lie on the Cytoplasmic side of the membrane. A helical membrane pass occupies residues 65 to 85 (FVNMAVAGLVLTALAPAYLLG). At 86-101 (PAHSRWALWSLSSEAH) the chain is on the extracellular side. Residues 102–122 (VTLLILFNVASLVTMYSTALL) form a helical membrane-spanning segment. Topologically, residues 123–145 (SLDYYIERALPRTYMASVYNTRH) are cytoplasmic. Residues 146–166 (VCGFVWGGAVLTSFSSLLFYI) form a helical membrane-spanning segment. Residues 167-188 (CSHVSSRIAECARMQNTEAADA) lie on the Extracellular side of the membrane. Residues 189-209 (ILVLIGYVVPGLAVLYALALI) traverse the membrane as a helical segment. At 210–232 (SRIGKEDTPLDQDTSRLDPSVHR) the chain is on the cytoplasmic side. A helical membrane pass occupies residues 233–253 (LLVATVCTQFGLWTPYYLSLG). The Extracellular segment spans residues 254-277 (HTVLTSRGRTVEGHYLGILQVAKD). A helical transmembrane segment spans residues 278–298 (LAKFLAFSSSSVTPLLYRYIN). Topologically, residues 299-333 (KAFPGKLRRLMKKMHCGRRHCSPDPSGIQQVMAQA) are cytoplasmic.

It belongs to the G-protein coupled receptor 1 family.

The protein localises to the cell membrane. Its function is as follows. GPCR receptor required for the regulation of plasma cholesterol levels. Receptor for CHLSN, a gut derived hormone which mediates an inhibitory effect of intestinal cholesterol absorption on hepatic cholesterol synthesis. Cholesin-binding exerts an antagonistic effect by inhibiting PKA signaling and suppressing SREBF2-controlled cholesterol in the liver. The polypeptide is G-protein coupled receptor 146 (Gpr146) (Mus musculus (Mouse)).